A 657-amino-acid chain; its full sequence is Glycogen debranching enzyme (657 aa).

D336 acts as the Nucleophile in catalysis. E371 (proton donor) is an active-site residue. The segment at 460 to 479 (ANGEENRDGTNNNYSNNHGK) is disordered.

This sequence belongs to the glycosyl hydrolase 13 family.

It catalyses the reaction Hydrolysis of (1-&gt;6)-alpha-D-glucosidic linkages to branches with degrees of polymerization of three or four glucose residues in limit dextrin.. The protein operates within glycan degradation; glycogen degradation. Removes maltotriose and maltotetraose chains that are attached by 1,6-alpha-linkage to the limit dextrin main chain, generating a debranched limit dextrin. This Escherichia coli (strain UTI89 / UPEC) protein is Glycogen debranching enzyme.